Here is a 357-residue protein sequence, read N- to C-terminus: Dual-specificity RNA methyltransferase RlmN (357 aa).

The active-site Proton acceptor is Glu-89. Residues 109–340 (EREKYTVCVS…CTIRESKALD (232 aa)) form the Radical SAM core domain. Cys-116 and Cys-345 are oxidised to a cystine. [4Fe-4S] cluster is bound by residues Cys-123, Cys-127, and Cys-130. S-adenosyl-L-methionine is bound by residues 173-174 (GE), Ser-203, 226-228 (SLH), and Asn-302. The S-methylcysteine intermediate role is filled by Cys-345.

It belongs to the radical SAM superfamily. RlmN family. The cofactor is [4Fe-4S] cluster.

The protein resides in the cytoplasm. It carries out the reaction adenosine(2503) in 23S rRNA + 2 reduced [2Fe-2S]-[ferredoxin] + 2 S-adenosyl-L-methionine = 2-methyladenosine(2503) in 23S rRNA + 5'-deoxyadenosine + L-methionine + 2 oxidized [2Fe-2S]-[ferredoxin] + S-adenosyl-L-homocysteine. It catalyses the reaction adenosine(37) in tRNA + 2 reduced [2Fe-2S]-[ferredoxin] + 2 S-adenosyl-L-methionine = 2-methyladenosine(37) in tRNA + 5'-deoxyadenosine + L-methionine + 2 oxidized [2Fe-2S]-[ferredoxin] + S-adenosyl-L-homocysteine. Functionally, specifically methylates position 2 of adenine 2503 in 23S rRNA and position 2 of adenine 37 in tRNAs. m2A2503 modification seems to play a crucial role in the proofreading step occurring at the peptidyl transferase center and thus would serve to optimize ribosomal fidelity. In Helicobacter pylori (strain ATCC 700392 / 26695) (Campylobacter pylori), this protein is Dual-specificity RNA methyltransferase RlmN.